The chain runs to 79 residues: Small ribosomal subunit protein bS21 (79 aa).

The disordered stretch occupies residues 59–79 (RKKMQREGLLPMKPKPVVGVR).

Belongs to the bacterial ribosomal protein bS21 family.

This is Small ribosomal subunit protein bS21 from Methylocella silvestris (strain DSM 15510 / CIP 108128 / LMG 27833 / NCIMB 13906 / BL2).